A 491-amino-acid polypeptide reads, in one-letter code: Probable glycine dehydrogenase (decarboxylating) subunit 2 (491 aa).

Lys273 is modified (N6-(pyridoxal phosphate)lysine).

It belongs to the GcvP family. C-terminal subunit subfamily. In terms of assembly, the glycine cleavage system is composed of four proteins: P, T, L and H. In this organism, the P 'protein' is a heterodimer of two subunits. Requires pyridoxal 5'-phosphate as cofactor.

The catalysed reaction is N(6)-[(R)-lipoyl]-L-lysyl-[glycine-cleavage complex H protein] + glycine + H(+) = N(6)-[(R)-S(8)-aminomethyldihydrolipoyl]-L-lysyl-[glycine-cleavage complex H protein] + CO2. Its function is as follows. The glycine cleavage system catalyzes the degradation of glycine. The P protein binds the alpha-amino group of glycine through its pyridoxal phosphate cofactor; CO(2) is released and the remaining methylamine moiety is then transferred to the lipoamide cofactor of the H protein. In Bacillus cereus (strain G9842), this protein is Probable glycine dehydrogenase (decarboxylating) subunit 2.